The following is a 70-amino-acid chain: ATP synthase subunit c (70 aa).

2 helical membrane-spanning segments follow: residues 4 to 24 and 47 to 67; these read IASA…NGLI and FVGV…AFMV.

This sequence belongs to the ATPase C chain family. F-type ATPases have 2 components, F(1) - the catalytic core - and F(0) - the membrane proton channel. F(1) has five subunits: alpha(3), beta(3), gamma(1), delta(1), epsilon(1). F(0) has three main subunits: a(1), b(2) and c(10-14). The alpha and beta chains form an alternating ring which encloses part of the gamma chain. F(1) is attached to F(0) by a central stalk formed by the gamma and epsilon chains, while a peripheral stalk is formed by the delta and b chains.

Its subcellular location is the cell membrane. F(1)F(0) ATP synthase produces ATP from ADP in the presence of a proton or sodium gradient. F-type ATPases consist of two structural domains, F(1) containing the extramembraneous catalytic core and F(0) containing the membrane proton channel, linked together by a central stalk and a peripheral stalk. During catalysis, ATP synthesis in the catalytic domain of F(1) is coupled via a rotary mechanism of the central stalk subunits to proton translocation. Its function is as follows. Key component of the F(0) channel; it plays a direct role in translocation across the membrane. A homomeric c-ring of between 10-14 subunits forms the central stalk rotor element with the F(1) delta and epsilon subunits. This chain is ATP synthase subunit c, found in Priestia megaterium (strain ATCC 12872 / QMB1551) (Bacillus megaterium).